Reading from the N-terminus, the 373-residue chain is sn-glycerol-3-phosphate import ATP-binding protein UgpC (373 aa).

The ABC transporter domain maps to 4 to 235 (LTLSNITKSY…PASVFVATFI (232 aa)). 37-44 (GPSGCGKS) is a binding site for ATP.

Belongs to the ABC transporter superfamily. sn-glycerol-3-phosphate importer (TC 3.A.1.1.3) family. In terms of assembly, the complex is composed of two ATP-binding proteins (UgpC), two transmembrane proteins (UgpA and UgpE) and a solute-binding protein (UgpB).

The protein resides in the cell inner membrane. It catalyses the reaction sn-glycerol 3-phosphate(out) + ATP + H2O = sn-glycerol 3-phosphate(in) + ADP + phosphate + H(+). Its function is as follows. Part of the ABC transporter complex UgpBAEC involved in sn-glycerol-3-phosphate (G3P) import. Responsible for energy coupling to the transport system. The chain is sn-glycerol-3-phosphate import ATP-binding protein UgpC from Psychromonas ingrahamii (strain DSM 17664 / CCUG 51855 / 37).